We begin with the raw amino-acid sequence, 609 residues long: DNA-directed RNA polymerase subunit beta' (609 aa).

4 residues coordinate Zn(2+): Cys-67, Cys-69, Cys-82, and Cys-85. Positions 460, 462, and 464 each coordinate Mg(2+).

It belongs to the RNA polymerase beta' chain family. RpoC1 subfamily. As to quaternary structure, in plastids the minimal PEP RNA polymerase catalytic core is composed of four subunits: alpha, beta, beta', and beta''. When a (nuclear-encoded) sigma factor is associated with the core the holoenzyme is formed, which can initiate transcription. Requires Mg(2+) as cofactor. Zn(2+) serves as cofactor.

The protein localises to the plastid. Its subcellular location is the chloroplast. It carries out the reaction RNA(n) + a ribonucleoside 5'-triphosphate = RNA(n+1) + diphosphate. Its function is as follows. DNA-dependent RNA polymerase catalyzes the transcription of DNA into RNA using the four ribonucleoside triphosphates as substrates. The sequence is that of DNA-directed RNA polymerase subunit beta' from Emiliania huxleyi (Coccolithophore).